Reading from the N-terminus, the 292-residue chain is Ribonuclease HIII (292 aa).

One can recognise an RNase H type-2 domain in the interval 76-292 (TNLIGTDEVG…TQKAIKIAQL (217 aa)). D82, E83, and D186 together coordinate a divalent metal cation.

It belongs to the RNase HII family. RnhC subfamily. Requires Mn(2+) as cofactor. Mg(2+) serves as cofactor.

Its subcellular location is the cytoplasm. The catalysed reaction is Endonucleolytic cleavage to 5'-phosphomonoester.. Functionally, endonuclease that specifically degrades the RNA of RNA-DNA hybrids. The chain is Ribonuclease HIII from Lactococcus lactis subsp. lactis (strain IL1403) (Streptococcus lactis).